Consider the following 425-residue polypeptide: Serine--tRNA ligase (425 aa).

226–228 (TSE) is a binding site for L-serine. Residues 257–259 (RRE) and V273 contribute to the ATP site. Residue E280 coordinates L-serine. Residue 344–347 (ELTS) coordinates ATP. T382 is a binding site for L-serine.

Belongs to the class-II aminoacyl-tRNA synthetase family. Type-1 seryl-tRNA synthetase subfamily. As to quaternary structure, homodimer. The tRNA molecule binds across the dimer.

Its subcellular location is the cytoplasm. It carries out the reaction tRNA(Ser) + L-serine + ATP = L-seryl-tRNA(Ser) + AMP + diphosphate + H(+). The catalysed reaction is tRNA(Sec) + L-serine + ATP = L-seryl-tRNA(Sec) + AMP + diphosphate + H(+). It participates in aminoacyl-tRNA biosynthesis; selenocysteinyl-tRNA(Sec) biosynthesis; L-seryl-tRNA(Sec) from L-serine and tRNA(Sec): step 1/1. Functionally, catalyzes the attachment of serine to tRNA(Ser). Is also able to aminoacylate tRNA(Sec) with serine, to form the misacylated tRNA L-seryl-tRNA(Sec), which will be further converted into selenocysteinyl-tRNA(Sec). This is Serine--tRNA ligase from Mycobacterium avium (strain 104).